Reading from the N-terminus, the 284-residue chain is Spermidine/putrescine transport system permease protein PotC homolog (284 aa).

A run of 6 helical transmembrane segments spans residues 13–33, 76–96, 116–136, 143–163, 189–209, and 242–262; these read YFFL…LVSL, IIIG…SAFA, LATP…NTWL, GFFT…LILI, FFHI…LVVF, and AWAI…VCLI. The 192-residue stretch at 72 to 263 folds into the ABC transmembrane type-1 domain; the sequence is LINSIIIGVI…ISVLGVCLIT (192 aa).

This sequence belongs to the binding-protein-dependent transport system permease family. CysTW subfamily.

It is found in the cell membrane. Functionally, required for the activity of the bacterial transport system of putrescine and spermidine. This is Spermidine/putrescine transport system permease protein PotC homolog (potC) from Mycoplasma genitalium (strain ATCC 33530 / DSM 19775 / NCTC 10195 / G37) (Mycoplasmoides genitalium).